Reading from the N-terminus, the 82-residue chain is Putative ribonuclease VapC34 (82 aa).

Mg(2+) is bound at residue Asp4.

Belongs to the PINc/VapC protein family. The cofactor is Mg(2+).

In terms of biological role, toxic component of a possible type II toxin-antitoxin (TA) system. A putative RNase. Its cognate antitoxin is VapB34. This Mycobacterium tuberculosis (strain CDC 1551 / Oshkosh) protein is Putative ribonuclease VapC34 (vapC34).